A 340-amino-acid chain; its full sequence is S-adenosylmethionine:tRNA ribosyltransferase-isomerase (340 aa).

It belongs to the QueA family. As to quaternary structure, monomer.

It is found in the cytoplasm. It catalyses the reaction 7-aminomethyl-7-carbaguanosine(34) in tRNA + S-adenosyl-L-methionine = epoxyqueuosine(34) in tRNA + adenine + L-methionine + 2 H(+). It functions in the pathway tRNA modification; tRNA-queuosine biosynthesis. Functionally, transfers and isomerizes the ribose moiety from AdoMet to the 7-aminomethyl group of 7-deazaguanine (preQ1-tRNA) to give epoxyqueuosine (oQ-tRNA). This Macrococcus caseolyticus (strain JCSC5402) (Macrococcoides caseolyticum) protein is S-adenosylmethionine:tRNA ribosyltransferase-isomerase.